Consider the following 350-residue polypeptide: Farnesyl pyrophosphate synthase (350 aa).

Isopentenyl diphosphate contacts are provided by Lys-55, Arg-58, and Gln-94. Residues Asp-101 and Asp-105 each coordinate Mg(2+). Arg-110 lines the dimethylallyl diphosphate pocket. An isopentenyl diphosphate-binding site is contributed by Arg-111. Lys-198, Thr-199, Gln-237, Lys-254, and Lys-263 together coordinate dimethylallyl diphosphate.

This sequence belongs to the FPP/GGPP synthase family. Mg(2+) serves as cofactor.

It localises to the cytoplasm. The catalysed reaction is isopentenyl diphosphate + dimethylallyl diphosphate = (2E)-geranyl diphosphate + diphosphate. It catalyses the reaction isopentenyl diphosphate + (2E)-geranyl diphosphate = (2E,6E)-farnesyl diphosphate + diphosphate. It participates in isoprenoid biosynthesis; farnesyl diphosphate biosynthesis; farnesyl diphosphate from geranyl diphosphate and isopentenyl diphosphate: step 1/1. Its pathway is isoprenoid biosynthesis; geranyl diphosphate biosynthesis; geranyl diphosphate from dimethylallyl diphosphate and isopentenyl diphosphate: step 1/1. Functionally, catalyzes the sequential condensation of isopentenyl pyrophosphate with the allylic pyrophosphates, dimethylallyl pyrophosphate, and then with the resultant geranylpyrophosphate to the ultimate product farnesyl pyrophosphate. The sequence is that of Farnesyl pyrophosphate synthase (FPS) from Zea mays (Maize).